We begin with the raw amino-acid sequence, 141 residues long: Ribosome-binding factor A (141 aa).

It belongs to the RbfA family. Monomer. Binds 30S ribosomal subunits, but not 50S ribosomal subunits or 70S ribosomes.

Its subcellular location is the cytoplasm. Functionally, one of several proteins that assist in the late maturation steps of the functional core of the 30S ribosomal subunit. Associates with free 30S ribosomal subunits (but not with 30S subunits that are part of 70S ribosomes or polysomes). Required for efficient processing of 16S rRNA. May interact with the 5'-terminal helix region of 16S rRNA. The sequence is that of Ribosome-binding factor A from Maricaulis maris (strain MCS10) (Caulobacter maris).